Consider the following 204-residue polypeptide: Cold and drought-regulated protein CORA (204 aa).

Tandem repeats lie at residues 54-59 (YNHGGG), 65-70 (YNHGGG), 71-76 (YNHGGG), 78-83 (YHNGGG), 85-90 (YNHGGG), 98-100 (HGG), 101-103 (HGG), 112-114 (HGG), 115-117 (HGG), 126-128 (HGG), 129-131 (HGG), 164-169 (YNHGGG), 171-176 (YNHGGG), 178-180 (HGG), 181-183 (HGG), 184-186 (HGG), 187-189 (HGG), and 190-192 (HGG). The interval 54–176 (YNHGGGYNGG…GGGGYNHGGG (123 aa)) is 7 X 6 AA repeats of Y-N-H-G-G-G. The interval 98–192 (HGGHGGGGYN…GHGGHGGHGG (95 aa)) is 11 X 3 AA repeats of H-G-G. Positions 169 to 194 (GGYNHGGGGHGGHGGHGGHGGHGGHG) are enriched in gly residues. The segment at 169–204 (GGYNHGGGGHGGHGGHGGHGGHGGHGAVQTEDNTQN) is disordered.

Belongs to the GRP family.

Its function is as follows. May be involved in resistance of the plant to environmental stress. This chain is Cold and drought-regulated protein CORA (CORA), found in Medicago sativa (Alfalfa).